A 278-amino-acid polypeptide reads, in one-letter code: Phage-like element PBSX protein XkdB (278 aa).

The H-T-H motif DNA-binding region spans leucine 58 to leucine 80. Disordered stretches follow at residues serine 117–isoleucine 136 and glutamine 239–valine 278. A compositionally biased stretch (basic and acidic residues) spans lysine 248–threonine 263.

This sequence to B.subtilis YqaL.

The sequence is that of Phage-like element PBSX protein XkdB (xkdB) from Bacillus subtilis (strain 168).